The chain runs to 251 residues: 5'-nucleotidase SurE (251 aa).

A divalent metal cation contacts are provided by D8, D9, S39, and N90.

Belongs to the SurE nucleotidase family. Requires a divalent metal cation as cofactor.

The protein localises to the cytoplasm. The catalysed reaction is a ribonucleoside 5'-phosphate + H2O = a ribonucleoside + phosphate. Nucleotidase that shows phosphatase activity on nucleoside 5'-monophosphates. The protein is 5'-nucleotidase SurE of Legionella pneumophila subsp. pneumophila (strain Philadelphia 1 / ATCC 33152 / DSM 7513).